The sequence spans 334 residues: Tetratricopeptide repeat protein 24 (334 aa).

TPR repeat units follow at residues 35–68 (GPFY…CRQP), 72–105 (ATVL…HGSV), 112–145 (GRSF…AQDT), and 152–185 (WQAC…CQHE). The interval 220–258 (PGKLQTSRKAKTSARVQSSAEDAQESQWEGEASEGGHEK) is disordered. Over residues 233 to 246 (ARVQSSAEDAQESQ) the composition is skewed to polar residues.

This chain is Tetratricopeptide repeat protein 24 (Ttc24), found in Mus musculus (Mouse).